A 436-amino-acid chain; its full sequence is Carboxypeptidase A5 (436 aa).

The first 33 residues, 1 to 33, serve as a signal peptide directing secretion; sequence MQGTPGGGTRPGPSPVDRRTLLVFSFILAAALG. A propeptide spans 34-126 (activation peptide); the sequence is QMNFTGDQVL…ERQAMAKSRR (93 aa). The 294-residue stretch at 138-431 folds into the Peptidase M14 domain; sequence SYHTLEEIYS…MALRTIMEHT (294 aa). Positions 196 and 199 each coordinate Zn(2+). Residues 196–199, Arg254, and 271–272 contribute to the substrate site; these read HSRE and NR. A disulfide bridge links Cys265 with Cys288. His323 is a binding site for Zn(2+). Substrate contacts are provided by residues 324–325 and Tyr375; that span reads SY. The Proton donor/acceptor role is filled by Glu397.

Belongs to the peptidase M14 family. Zn(2+) serves as cofactor. In terms of tissue distribution, expression is very low or not detectable.

The protein localises to the secreted. This is Carboxypeptidase A5 (CPA5) from Homo sapiens (Human).